A 245-amino-acid polypeptide reads, in one-letter code: MVLNSNLTTQDKQRIINPIERTNVTQDLSENVILTTVDDLYDWARLSSLWPLLFGTACCFIEFAALIGSRFDFDRFGLIPRSSPRQADLIITAGTITMKMAPQLVRLYEQMPEPKYVIAMGACTITGGMFSVDSPTAVRGVDKLIPVDVYLPGCPPRPEAIIDAIIKLRKKISNESIQERDKIKQTHRYYSTTHNLKPVEEILTGKYLQSDTRSAPPKELAEAIGMPIPPALLTEKAQKEEQTRG.

Residues cysteine 58, cysteine 59, cysteine 123, and cysteine 154 each coordinate [4Fe-4S] cluster. The tract at residues 210-245 (SDTRSAPPKELAEAIGMPIPPALLTEKAQKEEQTRG) is disordered. The segment covering 236–245 (KAQKEEQTRG) has biased composition (basic and acidic residues).

The protein belongs to the complex I 20 kDa subunit family. In terms of assembly, NDH-1 can be composed of about 15 different subunits; different subcomplexes with different compositions have been identified which probably have different functions. [4Fe-4S] cluster is required as a cofactor.

Its subcellular location is the cellular thylakoid membrane. It carries out the reaction a plastoquinone + NADH + (n+1) H(+)(in) = a plastoquinol + NAD(+) + n H(+)(out). It catalyses the reaction a plastoquinone + NADPH + (n+1) H(+)(in) = a plastoquinol + NADP(+) + n H(+)(out). In terms of biological role, NDH-1 shuttles electrons from an unknown electron donor, via FMN and iron-sulfur (Fe-S) centers, to quinones in the respiratory and/or the photosynthetic chain. The immediate electron acceptor for the enzyme in this species is believed to be plastoquinone. Couples the redox reaction to proton translocation, and thus conserves the redox energy in a proton gradient. Cyanobacterial NDH-1 also plays a role in inorganic carbon-concentration. The sequence is that of NAD(P)H-quinone oxidoreductase subunit K from Nostoc punctiforme (strain ATCC 29133 / PCC 73102).